Here is a 593-residue protein sequence, read N- to C-terminus: Dihydroxy-acid dehydratase (593 aa).

Residues 1–17 show a composition bias toward acidic residues; it reads MSQQTEPDDDAALDGDE. A disordered region spans residues 1-40; it reads MSQQTEPDDDAALDGDEPGAYGKDERLRSREVTEGPERAP. Residues 22-40 show a composition bias toward basic and acidic residues; it reads GKDERLRSREVTEGPERAP. Cysteine 72 provides a ligand contact to [2Fe-2S] cluster. Residue aspartate 104 participates in Mg(2+) binding. Position 145 (cysteine 145) interacts with [2Fe-2S] cluster. Positions 146 and 147 each coordinate Mg(2+). Lysine 147 bears the N6-carboxylysine mark. Cysteine 217 lines the [2Fe-2S] cluster pocket. Glutamate 475 contributes to the Mg(2+) binding site. Serine 501 serves as the catalytic Proton acceptor.

This sequence belongs to the IlvD/Edd family. Homodimer. Requires [2Fe-2S] cluster as cofactor. It depends on Mg(2+) as a cofactor.

It carries out the reaction (2R)-2,3-dihydroxy-3-methylbutanoate = 3-methyl-2-oxobutanoate + H2O. The enzyme catalyses (2R,3R)-2,3-dihydroxy-3-methylpentanoate = (S)-3-methyl-2-oxopentanoate + H2O. The protein operates within amino-acid biosynthesis; L-isoleucine biosynthesis; L-isoleucine from 2-oxobutanoate: step 3/4. It participates in amino-acid biosynthesis; L-valine biosynthesis; L-valine from pyruvate: step 3/4. Functionally, functions in the biosynthesis of branched-chain amino acids. Catalyzes the dehydration of (2R,3R)-2,3-dihydroxy-3-methylpentanoate (2,3-dihydroxy-3-methylvalerate) into 2-oxo-3-methylpentanoate (2-oxo-3-methylvalerate) and of (2R)-2,3-dihydroxy-3-methylbutanoate (2,3-dihydroxyisovalerate) into 2-oxo-3-methylbutanoate (2-oxoisovalerate), the penultimate precursor to L-isoleucine and L-valine, respectively. This Natronomonas pharaonis (strain ATCC 35678 / DSM 2160 / CIP 103997 / JCM 8858 / NBRC 14720 / NCIMB 2260 / Gabara) (Halobacterium pharaonis) protein is Dihydroxy-acid dehydratase.